We begin with the raw amino-acid sequence, 227 residues long: ATP-dependent dethiobiotin synthetase BioD (227 aa).

13–18 (DVGKTV) contributes to the ATP binding site. Threonine 17 contacts Mg(2+). Lysine 38 is a catalytic residue. ATP is bound by residues aspartate 55, 116 to 119 (EGAG), and 176 to 177 (NR). Mg(2+) is bound by residues aspartate 55 and glutamate 116.

It belongs to the dethiobiotin synthetase family. In terms of assembly, homodimer. Requires Mg(2+) as cofactor.

Its subcellular location is the cytoplasm. It catalyses the reaction (7R,8S)-7,8-diammoniononanoate + CO2 + ATP = (4R,5S)-dethiobiotin + ADP + phosphate + 3 H(+). The protein operates within cofactor biosynthesis; biotin biosynthesis; biotin from 7,8-diaminononanoate: step 1/2. Its function is as follows. Catalyzes a mechanistically unusual reaction, the ATP-dependent insertion of CO2 between the N7 and N8 nitrogen atoms of 7,8-diaminopelargonic acid (DAPA, also called 7,8-diammoniononanoate) to form a ureido ring. The chain is ATP-dependent dethiobiotin synthetase BioD from Aliivibrio salmonicida (strain LFI1238) (Vibrio salmonicida (strain LFI1238)).